The primary structure comprises 935 residues: Potassium channel AKT1 (935 aa).

The Cytoplasmic segment spans residues 1–106 (MARWGAARMA…YDRRYRIWET (106 aa)). The helical transmembrane segment at 107–127 (FLIVLVVYSAWVSPFEFGFIP) threads the bilayer. Over 128-136 (KPTGALATA) the chain is Extracellular. Residues 137–157 (DNVVNAFFAVDIILTFFVAYL) traverse the membrane as a helical segment. The Cytoplasmic portion of the chain corresponds to 158–178 (DKMSYMLEDDPKKIAWRYSTT). The chain crosses the membrane as a helical span at residues 179–199 (WLVLDVASTIPSEFARRILPS). Over 200-205 (KLRSYG) the chain is Extracellular. Residues 206-226 (FFNMLRLWRLRRVSSLFSRLE) traverse the membrane as a helical; Voltage-sensor segment. The Cytoplasmic portion of the chain corresponds to 227–240 (KDRHFNYFWVRCAK). A helical membrane pass occupies residues 241-261 (LICVTLFAVHCAACFYYLLAD). At 262–288 (RYPVPTSTWIGNYMADFHERSLWIRYV) the chain is on the extracellular side. Positions 289–308 (TSVYWSITTLTTVGYGDLHA) form an intramembrane region, pore-forming. At 309-312 (ENTR) the chain is on the extracellular side. A helical membrane pass occupies residues 313-333 (EMIFNIFYMLFNLGLTAYLIG). The Cytoplasmic portion of the chain corresponds to 334 to 935 (NMTNLVVHGT…WDAEKMKGKS (602 aa)). 419–538 (LFQGVSNDLI…TIIMNNLIQF (120 aa)) provides a ligand contact to a nucleoside 3',5'-cyclic phosphate. ANK repeat units follow at residues 565-594 (DLPI…DPNE), 598-627 (DGHT…DPNA), 631-660 (EGKV…DLSS), 662-691 (DTGL…DVNR), 695-724 (DGTT…DIDK), and 728-757 (NGWT…ATAS). Positions 826-854 (SQAQRETDHPLSRGGLAATGSPNPSSGSR) are disordered. The segment covering 845-854 (GSPNPSSGSR) has biased composition (polar residues). A KHA domain is found at 859–935 (RVTISCPEKG…WDAEKMKGKS (77 aa)).

The protein belongs to the potassium channel family. Plant (TC 1.A.1.4) subfamily. The potassium channel is probably a homo- or heterotetrameric complex of pore-forming subunits. Highly expressed in the epidermis and endodermis of roots, and at lower level in cells of the vasculature and the cortex. Expressed in xylem parenchyma, phloem and mesophyll cells of leaves.

It localises to the membrane. Its function is as follows. Highly selective inward-rectifying potassium channel that mediates potassium uptake by plant roots. The protein is Potassium channel AKT1 (AKT1) of Oryza sativa subsp. indica (Rice).